A 391-amino-acid polypeptide reads, in one-letter code: Recombination and repair protein (391 aa).

Position 60 to 67 (60 to 67 (GPSKSFKS)) interacts with ATP. Over residues 364–374 (KSPESKSKSAA) the composition is skewed to basic and acidic residues. The segment at 364 to 391 (KSPESKSKSAADLETDLEQLSDMEEFNE) is disordered. The segment covering 376-391 (LETDLEQLSDMEEFNE) has biased composition (acidic residues).

This sequence belongs to the RecA family.

Its function is as follows. Important in genetic recombination, DNA repair, and replication. Possesses pairing and strand-transfer activity. Interacts with dda and gene 32 proteins. The polypeptide is Recombination and repair protein (UVSX) (Enterobacteria phage T4 (Bacteriophage T4)).